The sequence spans 97 residues: Large ribosomal subunit protein uL23 (97 aa).

It belongs to the universal ribosomal protein uL23 family. Part of the 50S ribosomal subunit. Contacts protein L29, and trigger factor when it is bound to the ribosome.

In terms of biological role, one of the early assembly proteins it binds 23S rRNA. One of the proteins that surrounds the polypeptide exit tunnel on the outside of the ribosome. Forms the main docking site for trigger factor binding to the ribosome. In Sinorhizobium fredii (strain NBRC 101917 / NGR234), this protein is Large ribosomal subunit protein uL23.